The sequence spans 962 residues: Phagocyte signaling-impaired protein (962 aa).

TPR repeat units follow at residues 45–78 (LCAR…KPTD), 79–112 (DSTL…NPGN), and 523–560 (QIQL…FTNS). A disordered region spans residues 856–880 (TKVKKKQGDNKTQDTPQPVSEKERS).

Belongs to the MDM20/NAA25 family. As to quaternary structure, component of the N-terminal acetyltransferase B (NatB) complex.

The protein localises to the lysosome. Non-catalytic subunit of the NatB complex which catalyzes acetylation of the N-terminal methionine residues of proteins beginning with Met-Asp or Met-Glu. Has 2 roles in the larval immune response: required both for the phagocytic degradation of internalized bacteria and for the induction of Defensin in the fat body. Within the phagocytic blood cells, has a role in detection of infection and activation of the humoral immune response. The chain is Phagocyte signaling-impaired protein from Drosophila pseudoobscura pseudoobscura (Fruit fly).